Consider the following 71-residue polypeptide: U3-agatoxin-Ao1a (71 aa).

Positions 1–20 are cleaved as a signal peptide; the sequence is MKAVIFFCLLSVMVFTVIEA. Residues 21–33 constitute a propeptide that is removed on maturation; sequence VKEEGTKPAEAAR. Cystine bridges form between cysteine 35–cysteine 51, cysteine 42–cysteine 56, cysteine 50–cysteine 66, and cysteine 58–cysteine 64. Serine 70 carries the post-translational modification Serine amide.

It belongs to the neurotoxin 07 (Beta/delta-agtx) family. 01 (aga-2) subfamily. As to expression, expressed by the venom gland.

The protein localises to the secreted. Its function is as follows. Insecticidal neurotoxin that modulates the insect Nav channel (DmNaV1/tipE (para/tipE)) in a unique manner, with both the activation and inactivation processes being affected. The voltage dependence of activation is shifted toward more hyperpolarized potentials (analogous to site 4 toxins) and a non-inactivating persistent sodium current is induced (site 3-like action). Interestingly, both effects take place in a voltage-dependent manner, producing a bell-shaped curve between -80 and 0 mV. Compared to beta/delta-agatoxin-1 to -3, this toxin appears to affect the insect sodium channel only weakly. The protein is U3-agatoxin-Ao1a of Agelena orientalis (Funnel-web spider).